Consider the following 165-residue polypeptide: Anaerobic nitrite reductase GLB1 (165 aa).

Positions 12 to 162 constitute a Globin domain; it reads VFGEEQEALV…LVAAIKREMK (151 aa). Residues 45–49 carry the Homodimerization motif; the sequence is EIAPS. Residues S55, K69, H73, R103, T107, and H108 each contribute to the heme b site. The short motif at 115–127 is the Homodimerization element; the sequence is DGHFEVTGFALLE.

It belongs to the plant globin family. Homodimer. Heme b is required as a cofactor. In vegetative but not in embryonic organs.

Its subcellular location is the cytoplasm. It is found in the nucleus. The catalysed reaction is Fe(III)-heme b-[protein] + nitric oxide + H2O = Fe(II)-heme b-[protein] + nitrite + 2 H(+). Phytoglobin that reduces nitrite to nitric oxide (NO) under anoxic conditions (e.g. during flooding or in waterlogged soil). May not function as an oxygen storage or transport protein. Has an unusually high affinity for O(2) through an hexacoordinate heme iron because of a very low dissociation constant. This is Anaerobic nitrite reductase GLB1 (HB) from Zea mays subsp. parviglumis (Balsas teosinte).